The sequence spans 387 residues: Phosphoglycerate kinase (387 aa).

Substrate-binding positions include Asp-21–Asn-23, Arg-36, His-59–Arg-62, Arg-113, and Arg-146. Residues Lys-197, Glu-314, and Gly-340–Thr-343 contribute to the ATP site.

It belongs to the phosphoglycerate kinase family. As to quaternary structure, monomer.

The protein localises to the cytoplasm. The catalysed reaction is (2R)-3-phosphoglycerate + ATP = (2R)-3-phospho-glyceroyl phosphate + ADP. The protein operates within carbohydrate degradation; glycolysis; pyruvate from D-glyceraldehyde 3-phosphate: step 2/5. This chain is Phosphoglycerate kinase, found in Yersinia pestis bv. Antiqua (strain Antiqua).